The primary structure comprises 883 residues: MNEQYSALRSNVSMLGKVLGETIKDALGEHILDRVETIRKLSKSSRAGNEANRRELLTTLQNLSNDELLPVARAFSQFLNLANTAEQYHSISPKGEAASNPEVIARTLRKLKNQPDLNDATIKKAVESLSLELVLTAHPTEITRRTLIHKMGEINNCLKQLDNTDIADYERHQVMRRLRQLIAQSWHTDEIRKQRPSPVDEAKWGFAVVENSLWQGVPNYLRELNEQLEENLGYKLPVDFVPVRFTSWMGGDRDGNPNVTADITRHVLLLSRWKATDLFLKDIHVLVSELSMVDATPELLALVGEEGASEPYRYLMKKLRARLMATQSWLEARLKGEELPKPAGLLTQNEQLWEPLYACYQSLQACGMGIIANGELLDTLRRVKCFGVPLVRIDIRQESTRHTEALGEITRYLGIGDYESWSEADKQAFLIRELNSKRPLLPRNWEPSNDTREVLETCKVIAEAPKGSIAAYVISMAKTPSDVLAVHLLLKEAGIGFAMPVAPLFETLDDLNNADDVMTQLLNIDWYRGLIQGKQMVMIGYSDSAKDAGVMAASWAQYQAQDALIKTCEKAGIELTLFHGRGGSIGRGGAPAHAALLSQPPGSLEGGLRVTEQGEMIRFKYGLPEVTVSSLSLYTSAILEANLLPPPEPKDSWRHIMDELSVISCETYRGYVRENKDFVPYFRSATPEQELGKLPLGSRPAKRRPTGGVESLRAIPWIFAWTQNRLMLPAWLGAGTALQKVVEDGKQSELEAMCRDWPFFSTRLGMLEMVFSKADLWLADYYDQRLVAKTLWPLGKELRDLLEEDIKVVLAIANDSHLMADLPWIAESIQLRNVYTDPLNVLQAELLYRSRLTEEQGKSPDPRVEQALMVTIAGVAAGMRNTG.

Residues H138 and K546 contribute to the active site.

It belongs to the PEPCase type 1 family. The cofactor is Mg(2+).

The enzyme catalyses oxaloacetate + phosphate = phosphoenolpyruvate + hydrogencarbonate. Functionally, forms oxaloacetate, a four-carbon dicarboxylic acid source for the tricarboxylic acid cycle. The chain is Phosphoenolpyruvate carboxylase from Salmonella paratyphi A (strain ATCC 9150 / SARB42).